Consider the following 150-residue polypeptide: Large ribosomal subunit protein bL9 (150 aa).

Belongs to the bacterial ribosomal protein bL9 family.

Binds to the 23S rRNA. In Ralstonia pickettii (strain 12J), this protein is Large ribosomal subunit protein bL9.